We begin with the raw amino-acid sequence, 41 residues long: Maticotoxin A (41 aa).

2 disulfide bridges follow: Cys-3-Cys-22 and Cys-15-Cys-39.

Belongs to the three-finger toxin family. Short-chain subfamily. Expressed by the venom gland.

It localises to the secreted. This is Maticotoxin A from Calliophis bivirgatus (Blue Malaysian coral snake).